The sequence spans 536 residues: Interferon alpha/beta receptor 2 (536 aa).

Residues 1 to 26 form the signal peptide; that stretch reads MLLSQNVSAIGPLNLYPMVHISLVFG. Residues 27-246 are Extracellular-facing; sequence ISYVVPDLSD…RESESSEPAT (220 aa). Disulfide bonds link Cys-39–Cys-122 and Cys-85–Cys-93. 5 N-linked (GlcNAc...) asparagine glycosylation sites follow: Asn-58, Asn-87, Asn-101, Asn-147, and Asn-191. Cys-210 and Cys-230 are oxidised to a cystine. The helical transmembrane segment at 247–267 threads the bilayer; that stretch reads IGGILILFLLAAVCISTVMIL. Topologically, residues 268-536 are cytoplasmic; that stretch reads KRIGYICLRN…VRQVNLKNFN (269 aa). The residue at position 340 (Tyr-340) is a Phosphotyrosine. 3 consecutive repeat copies span residues 358 to 362, 363 to 367, and 368 to 372. The interval 358–372 is 3 X 5 AA tandem repeats of S-L-E-D-C; sequence SLEDCSLEDCSLEDC. Positions 369–434 are disordered; that stretch reads LEDCSDPSAE…SDSTEGSEGR (66 aa). Over residues 420-429 the composition is skewed to acidic residues; the sequence is TSEEDSDSTE. A mediates interaction with STAT2 (and required for the recruitment of USP18) region spans residues 432 to 456; it reads EGRIVFNVNLNSVCVRALEDDKDSE. At Ser-480 the chain carries Phosphoserine. The tract at residues 487–522 is disordered; that stretch reads EEGTQLPFTDPSMECLRPQDALSDKSDTSESDVDIG. A Phosphotyrosine modification is found at Tyr-525.

The protein belongs to the type II cytokine receptor family. Heterodimer with IFNAR1; forming the receptor for type I interferon. Interacts with the transcriptional factors STAT1 and STAT2. Interacts with JAK1. Interacts with USP18; indirectly via STAT2, it negatively regulates the assembly of the ternary interferon-IFNAR1-IFNAR2 complex and therefore type I interferon signaling. Phosphorylated on tyrosine residues upon interferon binding. Phosphorylation at Tyr-340 or Tyr-525 are sufficient to mediate interferon dependent activation of STAT1, STAT2 and STAT3 leading to antiproliferative effects on many different cell types. In terms of tissue distribution, expressed in the endometrium. Expressed in all tissues examined except conceptus at day 15 of pregnancy.

It localises to the cell membrane. In terms of biological role, together with IFNAR1, forms the heterodimeric receptor for type I interferons (including interferons alpha, beta, epsilon, omega and kappa). Type I interferon binding activates the JAK-STAT signaling cascade, resulting in transcriptional activation or repression of interferon-regulated genes that encode the effectors of the interferon response. Mechanistically, type I interferon-binding brings the IFNAR1 and IFNAR2 subunits into close proximity with one another, driving their associated Janus kinases (JAKs) (TYK2 bound to IFNAR1 and JAK1 bound to IFNAR2) to cross-phosphorylate one another. The activated kinases phosphorylate specific tyrosine residues on the intracellular domains of IFNAR1 and IFNAR2, forming docking sites for the STAT transcription factors (STAT1, STAT2 and STAT). STAT proteins are then phosphorylated by the JAKs, promoting their translocation into the nucleus to regulate expression of interferon-regulated genes. This Ovis aries (Sheep) protein is Interferon alpha/beta receptor 2 (IFNAR2).